Reading from the N-terminus, the 475-residue chain is Zinc finger protein 296 (475 aa).

Positions 1 to 78 (MSRRKAGSAP…SPGPMPAGAA (78 aa)) are disordered. Residue K35 forms a Glycyl lysine isopeptide (Lys-Gly) (interchain with G-Cter in SUMO2) linkage. C2H2-type zinc fingers lie at residues 157 to 180 (LSCLRCGKQFTVAWKLLRHAQWDH), 231 to 253 (PTCPVCKKTLSSFSNLKVHMRSH), and 259 to 281 (YACDQCPYACAQSSKLNRHKKTH). Residues 275–385 (NRHKKTHRQV…KSGGKSRGPG (111 aa)) are disordered. Low complexity-rich tracts occupy residues 295 to 313 (SQEQASAAPPEPAVHAAAP) and 326 to 338 (GAAATAGVQEPGA). Residues 339–351 (PGSGAQAGPGGDT) are compositionally biased toward gly residues. Over residues 354-367 (AITTEQRTDPANSQ) the composition is skewed to polar residues. C2H2-type zinc fingers lie at residues 386–408 (GSCEFCGKHFTNSSNLTVHRRSH), 414–436 (YTCEFCNYACAQSSKLNRHRRMH), and 445–468 (FECPHCHVPFGLRATLDKHLRQKH).

It belongs to the krueppel C2H2-type zinc-finger protein family. Interacts with KLF4.

It is found in the nucleus. Its function is as follows. May be a transcriptional corepressor with KLF4. This Homo sapiens (Human) protein is Zinc finger protein 296 (ZNF296).